Consider the following 220-residue polypeptide: Probable L-serine dehydratase, beta chain (220 aa).

The ACT domain occupies 148 to 220; it reads AILVVHNDKF…NIIQVTKIAD (73 aa).

The protein belongs to the iron-sulfur dependent L-serine dehydratase family. Heterodimer of an alpha chain and a beta chain. [4Fe-4S] cluster is required as a cofactor.

It catalyses the reaction L-serine = pyruvate + NH4(+). The protein operates within carbohydrate biosynthesis; gluconeogenesis. The sequence is that of Probable L-serine dehydratase, beta chain (sdaAB) from Bacillus subtilis (strain 168).